Reading from the N-terminus, the 392-residue chain is Major outer membrane protein P.IA (392 aa).

A signal peptide spans 1–19 (MRKKLTALVLSALPLAAVA).

Belongs to the Gram-negative porin family. In terms of assembly, homotrimer.

Its subcellular location is the cell outer membrane. Functionally, serves as a slightly cation selective porin. Major antigen on the gonococcal cell surface and it may have pathogenic properties in addition to its porin activity. The chain is Major outer membrane protein P.IA (porA) from Neisseria meningitidis serogroup B / serotype 15 (strain H44/76).